A 266-amino-acid polypeptide reads, in one-letter code: Putative carbamate hydrolase RutD (266 aa).

Positions 14 to 119 (PVVVLSAGLG…LVNGWLSLSP (106 aa)) constitute an AB hydrolase-1 domain.

It belongs to the AB hydrolase superfamily. Hydrolase RutD family.

It catalyses the reaction carbamate + 2 H(+) = NH4(+) + CO2. Functionally, involved in pyrimidine catabolism. May facilitate the hydrolysis of carbamate, a reaction that can also occur spontaneously. This Klebsiella pneumoniae subsp. pneumoniae (strain ATCC 700721 / MGH 78578) protein is Putative carbamate hydrolase RutD.